A 401-amino-acid polypeptide reads, in one-letter code: Glycerol-1-phosphate dehydrogenase [NAD(P)+] (401 aa).

Residues aspartate 57, 118-122 (GTIHD), and 140-143 (TAPS) each bind NAD(+). Aspartate 145 lines the substrate pocket. Residue serine 149 participates in NAD(+) binding. Residue aspartate 192 participates in substrate binding. Ni(2+)-binding residues include aspartate 192 and histidine 272. Histidine 276 contacts substrate. Position 292 (histidine 292) interacts with Ni(2+).

It belongs to the glycerol-1-phosphate dehydrogenase family. Homodimer. Ni(2+) is required as a cofactor.

Its subcellular location is the cytoplasm. The catalysed reaction is sn-glycerol 1-phosphate + NAD(+) = dihydroxyacetone phosphate + NADH + H(+). The enzyme catalyses sn-glycerol 1-phosphate + NADP(+) = dihydroxyacetone phosphate + NADPH + H(+). Catalyzes the NAD(P)H-dependent reduction of dihydroxyacetonephosphate (DHAP or glycerone phosphate) to glycerol 1-phosphate (G1P). The G1P thus generated is probably used for the synthesis of phosphoglycerolipids in Gram-positive bacterial species. This Bacillus licheniformis (strain ATCC 14580 / DSM 13 / JCM 2505 / CCUG 7422 / NBRC 12200 / NCIMB 9375 / NCTC 10341 / NRRL NRS-1264 / Gibson 46) protein is Glycerol-1-phosphate dehydrogenase [NAD(P)+].